A 187-amino-acid chain; its full sequence is MPREVNIRIAGTGGQGVIKAGLVLAEAFALEGKNVVQTQSYGPEARGGASRADIIVSDDEIDFPGLRRVDYLLVLHDSAYRKYYPQVDGETHVIYDSSLVNARRGLGFPFTETSIREFGTPLFANMIAIGALTAMLGLQPEKVEVVIQKRMRKAEENVKAFRIGFEMGRRVTKPKVVSHVVKPYILS.

In terms of assembly, heterotetramer of the KorA, KorB, KorC and KorD subunits.

The enzyme catalyses 2 oxidized [2Fe-2S]-[ferredoxin] + 2-oxoglutarate + CoA = succinyl-CoA + 2 reduced [2Fe-2S]-[ferredoxin] + CO2 + H(+). The polypeptide is 2-oxoglutarate synthase subunit KorC (korC) (Archaeoglobus fulgidus (strain ATCC 49558 / DSM 4304 / JCM 9628 / NBRC 100126 / VC-16)).